We begin with the raw amino-acid sequence, 86 residues long: Toxin Tpa4 (86 aa).

A signal peptide spans Met1–Ser19. The LCN-type CS-alpha/beta domain maps to Lys21–Arg82. Cystine bridges form between Cys31–Cys81, Cys35–Cys57, Cys43–Cys64, and Cys47–Cys66. Position 83 is a proline amide (Pro83).

It belongs to the long (4 C-C) scorpion toxin superfamily. Sodium channel inhibitor family. Alpha subfamily. As to expression, expressed by the venom gland.

The protein localises to the secreted. Alpha toxins bind voltage-independently at site-3 of sodium channels (Nav) and inhibit the inactivation of the activated channels, thereby blocking neuronal transmission. The polypeptide is Toxin Tpa4 (Tityus pachyurus (Colombian scorpion)).